Consider the following 222-residue polypeptide: Gamma-glutamylcyclotransferase and putative RNase MJ0434 (222 aa).

R75 is a catalytic residue. The RX(4)HXY motif signature appears at 75-82 (RDILIRKY). Y82 carries the O-di-AMP-tyrosine modification.

The protein in the N-terminal section; belongs to the HepT RNase toxin family. In the C-terminal section; belongs to the gamma-glutamylcyclotransferase family. As to quaternary structure, homodimer, probably forms a complex with cognate antitoxin MJ0435. Post-translationally, modified by cognate antitoxin MJ0435; probably at least 2 successive AMPylation events occur on Tyr-82.

In terms of biological role, probable toxic component of a putative type VII toxin-antitoxin (TA) system, probably an RNase. Probably neutralized by cognate antitoxin MJ0435. Neutralization may be due to AMPylation by MJ0435. The sequence is that of Gamma-glutamylcyclotransferase and putative RNase MJ0434 from Methanocaldococcus jannaschii (strain ATCC 43067 / DSM 2661 / JAL-1 / JCM 10045 / NBRC 100440) (Methanococcus jannaschii).